Reading from the N-terminus, the 158-residue chain is NADH-quinone oxidoreductase subunit B 2 (158 aa).

[4Fe-4S] cluster contacts are provided by cysteine 37, cysteine 38, cysteine 102, and cysteine 132.

This sequence belongs to the complex I 20 kDa subunit family. As to quaternary structure, NDH-1 is composed of 14 different subunits. Subunits NuoB, C, D, E, F, and G constitute the peripheral sector of the complex. Requires [4Fe-4S] cluster as cofactor.

The protein resides in the cell inner membrane. The catalysed reaction is a quinone + NADH + 5 H(+)(in) = a quinol + NAD(+) + 4 H(+)(out). Its function is as follows. NDH-1 shuttles electrons from NADH, via FMN and iron-sulfur (Fe-S) centers, to quinones in the respiratory chain. Couples the redox reaction to proton translocation (for every two electrons transferred, four hydrogen ions are translocated across the cytoplasmic membrane), and thus conserves the redox energy in a proton gradient. This Acidithiobacillus ferrooxidans (strain ATCC 53993 / BNL-5-31) (Leptospirillum ferrooxidans (ATCC 53993)) protein is NADH-quinone oxidoreductase subunit B 2.